The sequence spans 374 residues: Cell division protein DivIB (374 aa).

The tract at residues 1–90 (MWKISNENDI…EEEHFADRLP (90 aa)) is disordered. Residues 1 to 103 (MWKISNENDI…KTRNKRLYRR (103 aa)) are Cytoplasmic-facing. Residues 39-53 (YLKKQAEEAASKGEN) show a composition bias toward basic and acidic residues. Polar residues predominate over residues 56 to 75 (AEVTITLQEQSQEEPQQHLP). Residues 104 to 124 (LAFILTCLGTAILVALYFVSP) form a helical membrane-spanning segment. Residues 125–374 (LSRLSEVTVS…GENQEVQQAE (250 aa)) lie on the Extracellular side of the membrane. The POTRA domain maps to 126–197 (SRLSEVTVSG…NSFKIDIQEY (72 aa)). Residues 325–374 (KESEETGSEVSEDSAVENQEVVDPNAGVATDGANNGTPTNGENQEVQQAE) are disordered. Acidic residues predominate over residues 326 to 339 (ESEETGSEVSEDSA). Residues 356 to 374 (GANNGTPTNGENQEVQQAE) show a composition bias toward polar residues.

This sequence belongs to the FtsQ/DivIB family. DivIB subfamily.

The protein localises to the cell membrane. In terms of biological role, cell division protein that may be involved in stabilizing or promoting the assembly of the division complex. The polypeptide is Cell division protein DivIB (Enterococcus faecalis (strain 62)).